The sequence spans 222 residues: uncharacterized protein (222 aa).

Residues 1-27 (MSFTRRKFVLGMGTVIFFTGSASSLLA) constitute a signal peptide (tat-type signal). 3 4Fe-4S ferredoxin-type domains span residues 37 to 67 (YAMIHDESRCNGCNICARACRKTNHVPAQGS), 83 to 114 (TQYHFFRQSCQHCEDAPCIDVCPTGASWRDEQ), and 115 to 144 (GIVRVEKSQCIGCSYCIGACPYQVRYLNPV). [4Fe-4S] cluster-binding residues include Cys-46, Cys-49, Cys-52, Cys-56, Cys-92, Cys-95, Cys-100, Cys-104, Cys-124, Cys-127, Cys-130, Cys-134, Cys-151, Cys-154, Cys-167, and Cys-171.

In terms of processing, exported by the Tat system. The position of the signal peptide cleavage has not been experimentally proven. Can also be exported by the Sec system.

This is an uncharacterized protein from Escherichia coli (strain K12).